A 79-amino-acid polypeptide reads, in one-letter code: Large ribosomal subunit protein uL24 (79 aa).

It belongs to the universal ribosomal protein uL24 family. Part of the 50S ribosomal subunit.

One of two assembly initiator proteins, it binds directly to the 5'-end of the 23S rRNA, where it nucleates assembly of the 50S subunit. In terms of biological role, one of the proteins that surrounds the polypeptide exit tunnel on the outside of the subunit. The chain is Large ribosomal subunit protein uL24 from Lactobacillus delbrueckii subsp. bulgaricus (strain ATCC BAA-365 / Lb-18).